We begin with the raw amino-acid sequence, 267 residues long: MTKTKIMGILNVTPDSFSDGGKFNNVESAINRVKAMIDEGADIIDVGGVSTRPGHEMVSLEEEMNRVLPVVEAIVGFDVKISVDTFRSEVAEACLKLGVDMINDQWAGLYDHRMFQIVAKYDAEIILMHNGNGNRDEPVVEEMLTSLLAQAHQAKIAGIPSNKIWLDPGIGFAKTRNEEAEVMARLDELVATEYPVLLATSRKRFTKEMMGYDTTPVERDEVTAATTAYGIMKGVRAVRVHNVELNAKLAKGIDFLKENENARHNLS.

Positions 1–251 (MTKTKIMGIL…NVELNAKLAK (251 aa)) constitute a Pterin-binding domain. Asn11 contributes to the Mg(2+) binding site. (7,8-dihydropterin-6-yl)methyl diphosphate is bound by residues Thr51, Asp84, Asn103, Asp167, Lys203, and 239–241 (RVH).

Belongs to the DHPS family. Homodimer. Mg(2+) serves as cofactor.

The catalysed reaction is (7,8-dihydropterin-6-yl)methyl diphosphate + 4-aminobenzoate = 7,8-dihydropteroate + diphosphate. Its pathway is cofactor biosynthesis; tetrahydrofolate biosynthesis; 7,8-dihydrofolate from 2-amino-4-hydroxy-6-hydroxymethyl-7,8-dihydropteridine diphosphate and 4-aminobenzoate: step 1/2. In terms of biological role, catalyzes the condensation of para-aminobenzoate (pABA) with 6-hydroxymethyl-7,8-dihydropterin diphosphate (DHPt-PP) to form 7,8-dihydropteroate (H2Pte), the immediate precursor of folate derivatives. The protein is Dihydropteroate synthase (folP) of Staphylococcus aureus (strain MW2).